A 147-amino-acid chain; its full sequence is Large ribosomal subunit protein uL15 (147 aa).

Positions 1-42 are disordered; it reads MTIKVHHLRPAPGAKTAKTRVGRGEGSKGKTAGRGTKGSKAR.

It belongs to the universal ribosomal protein uL15 family. In terms of assembly, part of the 50S ribosomal subunit.

Binds to the 23S rRNA. The protein is Large ribosomal subunit protein uL15 of Salinispora arenicola (strain CNS-205).